The sequence spans 904 residues: E3 SUMO-protein ligase SIZ1 (904 aa).

Residues 1-13 show a composition bias toward acidic residues; sequence MINLEDYWEDETP. The disordered stretch occupies residues 1–21; sequence MINLEDYWEDETPGPDREPTN. One can recognise an SAP domain in the interval 34–68; that stretch reads MELLKVSELKDICRSVSFPVSGRKAVLQDLIRNFL. The segment at 122–170 is disordered; that stretch reads MEGPPTVQQQSPSVIRQSPTQRRKTSTTSSTSRAPPPTNPDASSSSSSF. Residues 127–136 are compositionally biased toward polar residues; the sequence is TVQQQSPSVI. Ser132 is modified (phosphoserine). The span at 137–154 shows a compositional bias: low complexity; the sequence is RQSPTQRRKTSTTSSTSR. A PINIT domain is found at 162–314; sequence DASSSSSSFA…KLFGYIVEMI (153 aa). The SP-RING-type zinc-finger motif lies at 344 to 431; that stretch reads EDEEMGLTTT…LQNCQKNVEQ (88 aa). Zn(2+) is bound by residues Cys377, His379, Cys400, and Cys403. Disordered stretches follow at residues 443 to 584, 596 to 616, and 672 to 733; these read ILED…DDDR, STNT…TLDP, and SPDV…ISDS. Over residues 444–454 the composition is skewed to acidic residues; the sequence is LEDDDDSDSDS. Residues 501–511 are compositionally biased toward basic and acidic residues; the sequence is NNHDDSNRHSN. Positions 512-553 are enriched in low complexity; sequence DNNNNSIKNNDSHNKNNNNNNNNNNNNNDNNNSIENNDSNSN. Composition is skewed to polar residues over residues 561–574, 596–611, and 672–683; these read RSNT…KNLM, STNT…SAPS, and SPDVSVSSPTPR. Over residues 684-699 the composition is skewed to low complexity; that stretch reads NTASNASSSALSTPPL. Polar residues predominate over residues 721–733; that stretch reads INSNSYTASISDS. Residue Ser794 is modified to Phosphoserine. Positions 794-904 are required for localization at the bud neck; sequence SLPTTEAITR…QDYGKKYNSG (111 aa). A compositionally biased stretch (polar residues) spans 877–894; that stretch reads RQLSNTSSTSPIMGTWKT. The segment at 877-904 is disordered; that stretch reads RQLSNTSSTSPIMGTWKTQDYGKKYNSG.

Belongs to the PIAS family. In terms of assembly, interacts with UBC9 and CDC3. Phosphorylated in early M-phase. In terms of processing, autosumoylated upon ethanol stress.

Its subcellular location is the cytoplasm. The protein localises to the nucleus. It is found in the bud neck. It functions in the pathway protein modification; protein sumoylation. In terms of biological role, acts as an E3 ligase mediating SUMO/Smt3 attachment to septins and PCNA. May be involved in chromosome maintenance. The chain is E3 SUMO-protein ligase SIZ1 (SIZ1) from Saccharomyces cerevisiae (strain ATCC 204508 / S288c) (Baker's yeast).